Here is a 497-residue protein sequence, read N- to C-terminus: Guanosine-5'-triphosphate,3'-diphosphate pyrophosphatase (497 aa).

This sequence belongs to the GppA/Ppx family. GppA subfamily.

It catalyses the reaction guanosine 3'-diphosphate 5'-triphosphate + H2O = guanosine 3',5'-bis(diphosphate) + phosphate + H(+). The protein operates within purine metabolism; ppGpp biosynthesis; ppGpp from GTP: step 2/2. Functionally, catalyzes the conversion of pppGpp to ppGpp. Guanosine pentaphosphate (pppGpp) is a cytoplasmic signaling molecule which together with ppGpp controls the 'stringent response', an adaptive process that allows bacteria to respond to amino acid starvation, resulting in the coordinated regulation of numerous cellular activities. The protein is Guanosine-5'-triphosphate,3'-diphosphate pyrophosphatase of Pseudoalteromonas translucida (strain TAC 125).